The primary structure comprises 475 residues: UDP-glycosyltransferase 708A6 (475 aa).

UDP-alpha-D-glucose-binding positions include serine 286, tryptophan 348–valine 349, histidine 366–glutamate 374, and phenylalanine 388–glutamine 391.

The protein belongs to the UDP-glycosyltransferase family. In terms of tissue distribution, expressed in radicles, hypocotyls and juvenile leaves. Expressed at low levels in roots.

Functionally, bifunctional glycosyltransferase that can produce both C- and O-glycosidated flavonoids. Converts 2-hydroxynaringenin to isovitexin. Converts eriodictyol to orientin and isoorientin. Converts naringenin and eriodictyol to naringenin 7-O-glucoside and eriodictyol 7-O-glucoside, respectively. In Zea mays (Maize), this protein is UDP-glycosyltransferase 708A6.